The primary structure comprises 49 residues: Protein YlcJ (49 aa).

The signal sequence occupies residues 1–21 (MSLVLCFLLMSLFFMYSFVLS).

The polypeptide is Protein YlcJ (Escherichia coli (strain K12)).